The primary structure comprises 505 residues: Actin nucleation-promoting factor WASL (505 aa).

N-acetylserine is present on Ser2. The WH1 domain maps to 34–141 (LGKKCVTMSS…KAVTDLLGRR (108 aa)). Disordered stretches follow at residues 138–163 (LGRR…ATVD) and 184–205 (HTKE…DIGT). Residues 186 to 198 (KEKKKGKAKKKRL) show a composition bias toward basic residues. Residues 203–216 (IGTPSNFQHIGHVG) enclose the CRIB domain. Ser242 carries the post-translational modification Phosphoserine; by TNK2. Residue Tyr256 is modified to Phosphotyrosine; by FAK1 and TNK2. The tract at residues 266-406 (EAVKNELRRQ…HQVPTTAGNK (141 aa)) is disordered. Composition is skewed to pro residues over residues 276–364 (APPP…PPPS) and 371–391 (VAPP…PPGL). Position 307 is an omega-N-methylarginine (Arg307). WH2 domains lie at 405–422 (NKAA…LKKV) and 433–450 (GRDA…LKSV). A disordered region spans residues 476 to 505 (QKRSKAIHSSDEDEDEDDEEDFEDDDEWED). 2 positions are modified to phosphoserine: Ser484 and Ser485. A compositionally biased stretch (acidic residues) spans 486-505 (DEDEDEDDEEDFEDDDEWED).

Binds actin and the Arp2/3 complex. Interacts with CDC42. Interacts with FCHSD1. Interacts with FCHSD2. Binds to SH3 domains of GRB2. Interacts with the C-terminal SH3 domain of DNMBP. Interacts with SNX9. Interacts with the WW domains of PRPF40A/FBP11. Interacts with PTK2/FAK1. Interacts with PACSIN1, PACSIN2 and PACSIN3. Interacts with NOSTRIN. Binds to TNK2. Interacts with SNX33. Interacts with NONO (via second RRM domain); the interaction is direct. Component of a multiprotein complex with NONO and SFPQ; associates with the complex via direct interaction with NONO. In terms of assembly, (Microbial infection) Interacts with E.coli effector protein EspF(U). Identified in a complex containing at least WASL, BAIAP2L1 and E.coli EspF(U). As to quaternary structure, (Microbial infection) Interacts with Shigella flexneri protein IcsA. The interaction with IcsA enhances the affinity of WASL for Arp2/3, thus assembling a tight complex which has maximal activity in actin assembly. Phosphorylation at Ser-242, Tyr-256, Ser-484 and Ser-485 enhances actin polymerization activity.

The protein localises to the cytoplasm. It is found in the cytoskeleton. Its subcellular location is the nucleus. In terms of biological role, regulates actin polymerization by stimulating the actin-nucleating activity of the Arp2/3 complex. Involved in various processes, such as mitosis and cytokinesis, via its role in the regulation of actin polymerization. Together with CDC42, involved in the extension and maintenance of the formation of thin, actin-rich surface projections called filopodia. In addition to its role in the cytoplasm, also plays a role in the nucleus by regulating gene transcription, probably by promoting nuclear actin polymerization. Binds to HSF1/HSTF1 and forms a complex on heat shock promoter elements (HSE) that negatively regulates HSP90 expression. Plays a role in dendrite spine morphogenesis. Decreasing levels of DNMBP (using antisense RNA) alters apical junction morphology in cultured enterocytes, junctions curve instead of being nearly linear. In Homo sapiens (Human), this protein is Actin nucleation-promoting factor WASL (WASL).